The sequence spans 188 residues: dCTP deaminase (188 aa).

DCTP is bound by residues 111–116 (KSTYAR), 135–137 (TLE), Q156, Y170, K179, and Q180. E137 serves as the catalytic Proton donor/acceptor.

This sequence belongs to the dCTP deaminase family. In terms of assembly, homotrimer.

It catalyses the reaction dCTP + H2O + H(+) = dUTP + NH4(+). It participates in pyrimidine metabolism; dUMP biosynthesis; dUMP from dCTP (dUTP route): step 1/2. Catalyzes the deamination of dCTP to dUTP. The chain is dCTP deaminase from Orientia tsutsugamushi (strain Ikeda) (Rickettsia tsutsugamushi).